We begin with the raw amino-acid sequence, 375 residues long: Leucoanthocyanidin dioxygenase 1 (375 aa).

A Fe2OG dioxygenase domain is found at leucine 218–proline 317. Fe cation contacts are provided by histidine 242, aspartate 244, and histidine 298. Residue arginine 308 coordinates 2-oxoglutarate.

It belongs to the iron/ascorbate-dependent oxidoreductase family. Requires L-ascorbate as cofactor. Fe(2+) is required as a cofactor.

It carries out the reaction a (2R,3S,4S)-leucoanthocyanidin + 2-oxoglutarate + O2 = a 4-H-anthocyanidin with a 3-hydroxy group + succinate + CO2 + 2 H2O. Its pathway is pigment biosynthesis; anthocyanin biosynthesis. In terms of biological role, involved in anthocyanin and protoanthocyanidin biosynthesis by catalyzing the oxidation of leucoanthocyanidins into anthocyanidins. In Oryza sativa subsp. japonica (Rice), this protein is Leucoanthocyanidin dioxygenase 1.